The sequence spans 157 residues: Oocyte zinc finger protein XlCOF2 (157 aa).

5 C2H2-type zinc fingers span residues 6–28, 34–56, 79–101, 107–129, and 135–157; these read FTCTECGKNFSFTTSFIRHMRIH, YSCADCGKHFSEKMYLQFHQKNP, FTCTECGKCFSLSSYLHRHQRLH, FSCAECGKAFSGKAQLQDHQNTH, and FTCTECGKCFTRKGSLQMHQKIH.

Belongs to the krueppel C2H2-type zinc-finger protein family.

Its subcellular location is the nucleus. Its function is as follows. May be involved in transcriptional regulation. The sequence is that of Oocyte zinc finger protein XlCOF2 from Xenopus laevis (African clawed frog).